The following is a 516-amino-acid chain: Probable cyclic di-GMP phosphodiesterase PdeB (516 aa).

Helical transmembrane passes span 6 to 26 (LVGL…GLSI) and 242 to 262 (QVFI…MFVL). The 249-residue stretch at 268 to 516 (IQSPHHRLQD…DFLRWAEQHL (249 aa)) folds into the EAL domain.

Its subcellular location is the cell inner membrane. The enzyme catalyses 3',3'-c-di-GMP + H2O = 5'-phosphoguanylyl(3'-&gt;5')guanosine + H(+). Functionally, phosphodiesterase (PDE) that catalyzes the hydrolysis of cyclic-di-GMP (c-di-GMP) to 5'-pGpG. This is Probable cyclic di-GMP phosphodiesterase PdeB from Escherichia coli (strain K12).